We begin with the raw amino-acid sequence, 433 residues long: 5-methylthioadenosine/S-adenosylhomocysteine deaminase (433 aa).

Residues histidine 62 and histidine 64 each contribute to the Zn(2+) site. The substrate site is built by glutamate 91, arginine 143, and histidine 183. Histidine 210 provides a ligand contact to Zn(2+). Substrate-binding residues include glutamate 213 and aspartate 298. Zn(2+) is bound at residue aspartate 298.

It belongs to the metallo-dependent hydrolases superfamily. MTA/SAH deaminase family. The cofactor is Zn(2+).

The catalysed reaction is S-adenosyl-L-homocysteine + H2O + H(+) = S-inosyl-L-homocysteine + NH4(+). It catalyses the reaction S-methyl-5'-thioadenosine + H2O + H(+) = S-methyl-5'-thioinosine + NH4(+). Catalyzes the deamination of 5-methylthioadenosine and S-adenosyl-L-homocysteine into 5-methylthioinosine and S-inosyl-L-homocysteine, respectively. Is also able to deaminate adenosine. The polypeptide is 5-methylthioadenosine/S-adenosylhomocysteine deaminase (Caldanaerobacter subterraneus subsp. tengcongensis (strain DSM 15242 / JCM 11007 / NBRC 100824 / MB4) (Thermoanaerobacter tengcongensis)).